The primary structure comprises 748 residues: ATP-dependent rRNA helicase SPB4 (748 aa).

A Q motif motif is present at residues 15-43 (WAKLNPPLSPWILDVINSMGFKNMTPVQA). Positions 46-260 (IPRAVKNQDC…GLGLRNPVRI (215 aa)) constitute a Helicase ATP-binding domain. 59–66 (AVTGSGKT) provides a ligand contact to ATP. Residues 119–156 (ESEEETGDVEAHAPPFASSSRSPSPQTPDKPLFPLPML) are disordered. Residues 132-142 (PPFASSSRSPS) are compositionally biased toward low complexity. The span at 143 to 152 (PQTPDKPLFP) shows a compositional bias: pro residues. Residues 207–210 (DEAD) carry the DEAD box motif. The region spanning 295 to 460 (KTLQLIRLLL…KAQRSILDFL (166 aa)) is the Helicase C-terminal domain. The interval 614–748 (AQRADNQSSN…IGGGMFDDLE (135 aa)) is disordered. Basic and acidic residues-rich tracts occupy residues 626-669 (ARAE…KYEW) and 708-730 (EIGKEYKSLKREIKEEKSVKESS). Residues 732–748 (GGAGGGGIGGGMFDDLE) are compositionally biased toward gly residues.

It belongs to the DEAD box helicase family. DDX55/SPB4 subfamily. As to quaternary structure, component of pre-60S ribosomal complexes.

Its subcellular location is the nucleus. The protein localises to the nucleolus. It carries out the reaction ATP + H2O = ADP + phosphate + H(+). ATP-binding RNA helicase involved in the biogenesis of 60S ribosomal subunits. Binds 90S pre-ribosomal particles and dissociates from pre-60S ribosomal particles after processing of 27SB pre-rRNA. Required for the normal formation of 18S rRNA through the processing of pre-rRNAs at sites A0, A1 and A2, and the normal formation of 25S and 5.8S rRNAs through the processing of pre-rRNAs at sites C1 and C2. The polypeptide is ATP-dependent rRNA helicase SPB4 (Cryptococcus neoformans var. neoformans serotype D (strain B-3501A) (Filobasidiella neoformans)).